Reading from the N-terminus, the 348-residue chain is Phosphate acyltransferase (348 aa).

The protein belongs to the PlsX family. Homodimer. Probably interacts with PlsY.

It is found in the cytoplasm. The catalysed reaction is a fatty acyl-[ACP] + phosphate = an acyl phosphate + holo-[ACP]. Its pathway is lipid metabolism; phospholipid metabolism. Catalyzes the reversible formation of acyl-phosphate (acyl-PO(4)) from acyl-[acyl-carrier-protein] (acyl-ACP). This enzyme utilizes acyl-ACP as fatty acyl donor, but not acyl-CoA. This is Phosphate acyltransferase from Pectobacterium carotovorum subsp. carotovorum (strain PC1).